The chain runs to 396 residues: S-adenosylmethionine synthase (396 aa).

Residue histidine 16 participates in ATP binding. Residue aspartate 18 coordinates Mg(2+). Glutamate 44 contributes to the K(+) binding site. L-methionine is bound by residues glutamate 57 and glutamine 100. Positions 100-110 (QSPDIAQGVDR) are flexible loop. Residues 167–169 (DAK), 232–233 (RF), aspartate 241, 247–248 (RK), alanine 264, and lysine 268 contribute to the ATP site. Aspartate 241 contributes to the L-methionine binding site. Residue lysine 272 coordinates L-methionine.

The protein belongs to the AdoMet synthase family. As to quaternary structure, homotetramer; dimer of dimers. It depends on Mg(2+) as a cofactor. K(+) serves as cofactor.

Its subcellular location is the cytoplasm. It carries out the reaction L-methionine + ATP + H2O = S-adenosyl-L-methionine + phosphate + diphosphate. Its pathway is amino-acid biosynthesis; S-adenosyl-L-methionine biosynthesis; S-adenosyl-L-methionine from L-methionine: step 1/1. Catalyzes the formation of S-adenosylmethionine (AdoMet) from methionine and ATP. The overall synthetic reaction is composed of two sequential steps, AdoMet formation and the subsequent tripolyphosphate hydrolysis which occurs prior to release of AdoMet from the enzyme. The chain is S-adenosylmethionine synthase from Ralstonia pickettii (strain 12J).